A 503-amino-acid chain; its full sequence is UDP-N-acetylmuramoyl-L-alanyl-D-glutamate--2,6-diaminopimelate ligase (503 aa).

S32 contributes to the UDP-N-acetyl-alpha-D-muramoyl-L-alanyl-D-glutamate binding site. 117–123 (GTNGKTT) is an ATP binding site. Residues 159–160 (TT), S186, Q192, and R194 each bind UDP-N-acetyl-alpha-D-muramoyl-L-alanyl-D-glutamate. Position 226 is an N6-carboxylysine (K226). Residues R396, 420–423 (DNPR), G471, and E475 each bind meso-2,6-diaminopimelate. The Meso-diaminopimelate recognition motif signature appears at 420–423 (DNPR).

Belongs to the MurCDEF family. MurE subfamily. Requires Mg(2+) as cofactor. Post-translationally, carboxylation is probably crucial for Mg(2+) binding and, consequently, for the gamma-phosphate positioning of ATP.

The protein localises to the cytoplasm. The enzyme catalyses UDP-N-acetyl-alpha-D-muramoyl-L-alanyl-D-glutamate + meso-2,6-diaminopimelate + ATP = UDP-N-acetyl-alpha-D-muramoyl-L-alanyl-gamma-D-glutamyl-meso-2,6-diaminopimelate + ADP + phosphate + H(+). It participates in cell wall biogenesis; peptidoglycan biosynthesis. Functionally, catalyzes the addition of meso-diaminopimelic acid to the nucleotide precursor UDP-N-acetylmuramoyl-L-alanyl-D-glutamate (UMAG) in the biosynthesis of bacterial cell-wall peptidoglycan. The polypeptide is UDP-N-acetylmuramoyl-L-alanyl-D-glutamate--2,6-diaminopimelate ligase (Prochlorococcus marinus (strain SARG / CCMP1375 / SS120)).